Reading from the N-terminus, the 118-residue chain is Holo-[acyl-carrier-protein] synthase (118 aa).

The Mg(2+) site is built by aspartate 8 and glutamate 58.

It belongs to the P-Pant transferase superfamily. AcpS family. Mg(2+) is required as a cofactor.

It localises to the cytoplasm. It catalyses the reaction apo-[ACP] + CoA = holo-[ACP] + adenosine 3',5'-bisphosphate + H(+). Functionally, transfers the 4'-phosphopantetheine moiety from coenzyme A to a Ser of acyl-carrier-protein. This chain is Holo-[acyl-carrier-protein] synthase, found in Streptococcus uberis (strain ATCC BAA-854 / 0140J).